A 237-amino-acid chain; its full sequence is Putative anti-FlhC(2)FlhD(4) factor YdiV (237 aa).

The 237-residue stretch at 1–237 (MKIFLENLYH…INQITTLVQR (237 aa)) folds into the EAL domain.

Belongs to the YdiV family.

In terms of biological role, upon overexpression acts as a novel anti-FlhC(2)FlhD(4) factor, decreasing its DNA-binding activity, able to negatively regulate expression of flagellar class II operons including FliC. This is Putative anti-FlhC(2)FlhD(4) factor YdiV (ydiV) from Escherichia coli (strain K12).